We begin with the raw amino-acid sequence, 307 residues long: MASWVFCNRCFQSPHRKSSFSLTSCGHVYCHSCLLKGTKNECVICQAPCQTVLLSKHTNSNIQTFFLGIDGLCKKYSQETSQISEFQEKHRRRLVAFYQEKISQLEESLRKSVLQIKQLQSMRSSQQPAFNKIKNSVSTKPNGYLFLPPNSSLPDRIESMDIDLTPPARKPEMSAGPSRISVISPPQDGRMGSVTCRGPQHLSLTPSHASMTKASRVPPLQMPYKELSPPPASQLSSRATQGPSPSVSSSWTGPPRQPISISGLLQRQCAGSASPRGMDTEKMSPFLPSTPTNLRSVASPWHACVHR.

The RING-type zinc-finger motif lies at 7-46 (CNRCFQSPHRKSSFSLTSCGHVYCHSCLLKGTKNECVICQ). The stretch at 91–124 (RRRLVAFYQEKISQLEESLRKSVLQIKQLQSMRS) forms a coiled coil. Residues 164 to 291 (LTPPARKPEM…KMSPFLPSTP (128 aa)) are disordered. 3 stretches are compositionally biased toward polar residues: residues 202 to 213 (LSLTPSHASMTK), 233 to 252 (SQLSSRATQGPSPSVSSSWT), and 259 to 271 (ISISGLLQRQCAG).

In terms of tissue distribution, specifically expressed in meiocytes of the gonads.

Its subcellular location is the nucleus. It localises to the chromosome. The protein operates within protein modification; protein sumoylation. In terms of biological role, SUMO E3 ligase that acts as a regulator of crossing-over during meiosis: required to couple chromosome synapsis to the formation of crossover-specific recombination complexes. Localizes to recombination sites and stabilizes meiosis-specific recombination factors, such as MutS-gamma complex proteins (MSH4 and MSH5) and TEX11. May mediate sumoylation of target proteins MSH4 and/or MSH5, leading to enhance their binding to recombination sites. Acts as a limiting factor for crossover designation and/or reinforcement and plays an antagonist role with CCNB1IP1/HEI10 in the regulation of meiotic recombination. This chain is Probable E3 SUMO-protein ligase RNF212 (Rnf212), found in Mus musculus (Mouse).